Consider the following 331-residue polypeptide: MSLPLRLALLPTLLASASAFAACPAPPPGQPDIRAIGYYTDKAGSVIDPALQQQNKDATAPLDRYAADVARMSDDYLRNGDPAAAQCTLSWLGAWADDGAMLGQMIRVNNDQSFYMRQWMLDAVAMAYLKVHDQANPQQRARIDPWLQKLARANLAYWDNPKRRRNNHYYWGGLGVLATGLATDDDALWQAGHAAFQKGIDDIQDDGSLPLEMARGQRALHYHDYALAPLVMMAELARLRGQDWYASRNHAIDRLARRVIEGSRDPAWFNQHTGAAQLPLQASGWVEFYRLRSPDGGVFDAAHARGPFHSPRLGGDLTLMATHGIVRTPLR.

A signal peptide spans methionine 1–alanine 22. The N-palmitoyl cysteine moiety is linked to residue cysteine 23. Cysteine 23 carries S-diacylglycerol cysteine lipidation.

It belongs to the polysaccharide lyase 5 family.

It is found in the cell outer membrane. The catalysed reaction is Eliminative cleavage of alginate to give oligosaccharides with 4-deoxy-alpha-L-erythro-hex-4-enuronosyl groups at their non-reducing ends and beta-D-mannuronate at their reducing end.. It carries out the reaction [hyaluronan](n) = n 3-(4-deoxy-beta-D-gluc-4-enuronosyl)-N-acetyl-D-glucosamine + H2O. The enzyme catalyses Eliminative cleavage of (1-&gt;4)-beta-D-glucuronans to give oligosaccharides with 4-deoxy-beta-D-gluc-4-enuronosyl groups at their non-reducing ends. Complete degradation of glucuronans results in the formation of tetrasaccharides.. Its activity is regulated as follows. Is inhibited by mono- and divalent cations as well as L-ascorbic acid 6-hexadecanoate. Functionally, polysaccharide lyase that catalyzes the depolymerization of several anionic polysaccharides via a beta-elimination mechanism. Exhibits broad substrate specificity, catalyzing the degradation of not only alginate and poly-beta-D-mannuronate (poly-ManA), but poly-beta-D-glucuronate (poly-GlcA or poly-GlcUA) and hyaluronate (HA) as well. The oligosaccharide products formed by enzymatic cleavage are comprised mainly of disaccharides, with a lower abundance of trimers and pentamers. Is not active on poly-D-galacturonate, heparin and heparin sulfate. This Stenotrophomonas maltophilia (strain K279a) protein is Polysaccharide lyase.